We begin with the raw amino-acid sequence, 201 residues long: Ribonuclease HII (201 aa).

The region spanning 10–200 is the RNase H type-2 domain; it reads LIEAGCDEAG…LGTDPQLEIP (191 aa). Residues aspartate 16, glutamate 17, and aspartate 108 each contribute to the a divalent metal cation site.

Belongs to the RNase HII family. Mn(2+) serves as cofactor. Mg(2+) is required as a cofactor.

It is found in the cytoplasm. The catalysed reaction is Endonucleolytic cleavage to 5'-phosphomonoester.. Functionally, endonuclease that specifically degrades the RNA of RNA-DNA hybrids. This is Ribonuclease HII from Phocaeicola vulgatus (strain ATCC 8482 / DSM 1447 / JCM 5826 / CCUG 4940 / NBRC 14291 / NCTC 11154) (Bacteroides vulgatus).